Reading from the N-terminus, the 522-residue chain is 2-isopropylmalate synthase (522 aa).

Residues 5 to 267 (VIIFDTTLRD…ETGINAKEIH (263 aa)) enclose the Pyruvate carboxyltransferase domain. Residues Asp-14, His-202, His-204, and Asn-238 each coordinate Mn(2+). A regulatory domain region spans residues 392–522 (QLQQLVVQSD…MQKNRELGGV (131 aa)).

This sequence belongs to the alpha-IPM synthase/homocitrate synthase family. LeuA type 1 subfamily. Homodimer. The cofactor is Mn(2+).

It localises to the cytoplasm. The catalysed reaction is 3-methyl-2-oxobutanoate + acetyl-CoA + H2O = (2S)-2-isopropylmalate + CoA + H(+). Its pathway is amino-acid biosynthesis; L-leucine biosynthesis; L-leucine from 3-methyl-2-oxobutanoate: step 1/4. Catalyzes the condensation of the acetyl group of acetyl-CoA with 3-methyl-2-oxobutanoate (2-ketoisovalerate) to form 3-carboxy-3-hydroxy-4-methylpentanoate (2-isopropylmalate). This chain is 2-isopropylmalate synthase, found in Shewanella putrefaciens (strain CN-32 / ATCC BAA-453).